A 449-amino-acid chain; its full sequence is Probable multidrug resistance protein NorM (449 aa).

12 consecutive transmembrane segments (helical) span residues 17–39 (LMWP…TIMA), 54–76 (VGLW…PLVA), 97–119 (VAVS…LPIL), 129–151 (AGLF…ALRG), 164–186 (VISL…GIGP), 196–215 (GFAT…SYIY), 243–265 (LGLP…AIVL), 280–302 (MSVT…IRVG), 315–337 (LVQK…LIWF), 352–369 (VFDI…YQLM), 390–412 (MWIT…ARVA), and 417–439 (AGVW…MRLY).

This sequence belongs to the multi antimicrobial extrusion (MATE) (TC 2.A.66.1) family.

The protein resides in the cell inner membrane. Multidrug efflux pump. This Acinetobacter baylyi (strain ATCC 33305 / BD413 / ADP1) protein is Probable multidrug resistance protein NorM (norM).